The sequence spans 628 residues: Patulin synthase (628 aa).

A signal peptide spans 1 to 19 (MRLTSGIFHAAIAVAAVGA). N-linked (GlcNAc...) asparagine glycosylation occurs at Asn49. FAD is bound by residues 61 to 62 (TA) and 82 to 83 (EA). The N-linked (GlcNAc...) asparagine glycan is linked to Asn93. 148–151 (NYMA) is a binding site for FAD. Residues Asn198, Asn261, Asn283, Asn429, Asn486, and Asn526 are each glycosylated (N-linked (GlcNAc...) asparagine). Residue His564 is the Proton acceptor of the active site. A glycan (N-linked (GlcNAc...) asparagine) is linked at Asn575. FAD-binding positions include Ala598 and 609–610 (PQ).

The protein belongs to the GMC oxidoreductase family. FAD is required as a cofactor.

Its subcellular location is the cytoplasm. It is found in the cell cortex. It localises to the vacuole. The protein resides in the secreted. The protein localises to the cell wall. The enzyme catalyses (E)-ascladiol + A = patulin + AH2. Its pathway is mycotoxin biosynthesis; patulin biosynthesis. Its function is as follows. Patulin synthase; part of the gene cluster that mediates the biosynthesis of patulin, an acetate-derived tetraketide mycotoxin produced by several fungal species that shows antimicrobial properties against several bacteria. PatE catalyzes the last step of the pathway which is the conversion of E-ascladiol to patulin. The pathway begins with the synthesis of 6-methylsalicylic acid by the polyketide synthase (PKS) patK via condensation of acetate and malonate units. The 6-methylsalicylic acid decarboxylase patG then catalyzes the decarboxylation of 6-methylsalicylic acid to yield m-cresol (also known as 3-methylphenol). These first reactions occur in the cytosol. The intermediate m-cresol is then transported into the endoplasmic reticulum where the cytochrome P450 monooxygenase patH converts it to m-hydroxybenzyl alcohol, which is further converted to gentisyl alcohol by the cytochrome P450 monooxygenase patI. The oxidoreductases patJ and patO further convert gentisyl alcohol to isoepoxydon in the vacuole. PatN catalyzes then the transformation of isoepoxydon into phyllostine. The cluster protein patF is responsible for the conversion from phyllostine to neopatulin whereas the alcohol dehydrogenase patD converts neopatulin to E-ascladiol. The steps between isoepoxydon and E-ascladiol occur in the cytosol, and E-ascladiol is probably secreted to the extracellular space by one of the cluster-specific transporters patC or patM. Finally, the secreted patulin synthase patE catalyzes the conversion of E-ascladiol to patulin. The sequence is that of Patulin synthase from Penicillium expansum (Blue mold rot fungus).